The following is a 175-amino-acid chain: Large ribosomal subunit protein uL10 (175 aa).

It belongs to the universal ribosomal protein uL10 family. Part of the ribosomal stalk of the 50S ribosomal subunit. The N-terminus interacts with L11 and the large rRNA to form the base of the stalk. The C-terminus forms an elongated spine to which L12 dimers bind in a sequential fashion forming a multimeric L10(L12)X complex.

Its function is as follows. Forms part of the ribosomal stalk, playing a central role in the interaction of the ribosome with GTP-bound translation factors. This Alkalilimnicola ehrlichii (strain ATCC BAA-1101 / DSM 17681 / MLHE-1) protein is Large ribosomal subunit protein uL10.